Reading from the N-terminus, the 602-residue chain is MAADTTTLTTDCLFARTRVQVCDALRSVVPGLPEEVVQRVDLTPTRDPSHGDMATNAAMLAAKPARRKPAEIAAELVDKLFALPEVAKAEAAGPGFVNLTLKPEVLQGVAVSILKAGDQYGRSTMGQGTRVNVEYVSANPTGPMHVGHCRGAVVGDALANLLEAAGNTVTREYYINDAGTQVVALTWATYWRYLQVIGTEISADDFSPLTPNGLQYQGEYLIPVAQSIADKHGRALANADGGPADPSVWFETVRREALTQMMAAIREDLEALGISHEVFASEAETLASGRVDAAIAKLDSKGLLYEGVLEPPKGKMPEDWEARPQTLFRSTEFGDDQDRALRKSDGTNTYFANDIGYHAQKAENADVLIDVLGADHGGYVSRMRAAISALTDGKTGFEVVMCQIVRVVKNGEPVRMSKRAGTFVTLRDLLDEVGRDAVRFTMLTRKADAQMEFDLDAVVAQTRDNPVFYVQYAHARCRSVLRSAETMFGADTVTPEALCSADLSNLSSDVELAVLRRLAAFPRSVEAAATAREPHRIATYCIDLASDFHALWNRGREDTTLRFLHENDRATSLAKLALVSAIAGTLRCALTILGVVPVEEMR.

A 'HIGH' region motif is present at residues 138–148; it reads ANPTGPMHVGH.

This sequence belongs to the class-I aminoacyl-tRNA synthetase family. Monomer.

Its subcellular location is the cytoplasm. The catalysed reaction is tRNA(Arg) + L-arginine + ATP = L-arginyl-tRNA(Arg) + AMP + diphosphate. This is Arginine--tRNA ligase from Gluconobacter oxydans (strain 621H) (Gluconobacter suboxydans).